The chain runs to 98 residues: NADH-ubiquinone oxidoreductase chain 4L (98 aa).

Helical transmembrane passes span serine 2 to phenylalanine 22, leucine 26 to isoleucine 46, and isoleucine 59 to alanine 79.

The protein belongs to the complex I subunit 4L family. Core subunit of respiratory chain NADH dehydrogenase (Complex I) which is composed of 45 different subunits.

The protein resides in the mitochondrion inner membrane. The enzyme catalyses a ubiquinone + NADH + 5 H(+)(in) = a ubiquinol + NAD(+) + 4 H(+)(out). Core subunit of the mitochondrial membrane respiratory chain NADH dehydrogenase (Complex I) which catalyzes electron transfer from NADH through the respiratory chain, using ubiquinone as an electron acceptor. Part of the enzyme membrane arm which is embedded in the lipid bilayer and involved in proton translocation. The chain is NADH-ubiquinone oxidoreductase chain 4L (MT-ND4L) from Alexandromys kikuchii (Taiwan vole).